A 1237-amino-acid chain; its full sequence is Tyrosine-protein kinase sid-3 (1237 aa).

Residues 107–369 form the Protein kinase domain; sequence IKLYELIGEG…REDLVAAMFL (263 aa). ATP contacts are provided by residues 113–121 and lysine 139; that span reads IGEGSFAVV. The active-site Proton acceptor is aspartate 230. The SH3 domain occupies 366-426; that stretch reads AMFLDAVARE…PRSVVFAQTN (61 aa). 6 disordered regions span residues 683-704, 741-802, 826-919, 940-986, 999-1018, and 1134-1156; these read NQGSSTGNGVRPRPASSIGIQN, PPAP…APVQ, IQPQ…EERR, SNST…SEPI, SATTSQAKPVTQPIRHPSPP, and QQRQAGSSSRAVPPASASTSAAS. Composition is skewed to polar residues over residues 749-766, 778-791, and 847-863; these read QPVSSQRVAQQQQNTLQK, KRPTGTTAPPSNGF, and SAPTHSNVAPTTSSQAS. 2 stretches are compositionally biased toward low complexity: residues 881 to 910 and 940 to 961; these read TPITVAPVHAAPTTSAPSTSVVTRRPTSTT and SNSTSSLPSAAVSTASSVPSTA. The span at 1138–1156 shows a compositional bias: low complexity; that stretch reads AGSSSRAVPPASASTSAAS.

Belongs to the protein kinase superfamily. Tyr protein kinase family. SYK/ZAP-70 subfamily. In terms of tissue distribution, ubiquitously present in all tissues tested. Expressed in the somatic cells of gut, pharynx, body wall muscle, neurons, skin and excretory canal cells.

Its subcellular location is the cytoplasm. It carries out the reaction L-tyrosyl-[protein] + ATP = O-phospho-L-tyrosyl-[protein] + ADP + H(+). In terms of biological role, tyrosine-protein kinase which plays a role in RNA-mediated gene silencing by mediating import of double-stranded RNA (dsRNA) into cells. Not required for import of ingested dsRNA into intestinal cells but involved in subsequent export from intestinal cells to internal tissues. The sequence is that of Tyrosine-protein kinase sid-3 (sid-3) from Caenorhabditis elegans.